A 392-amino-acid polypeptide reads, in one-letter code: Formate-dependent phosphoribosylglycinamide formyltransferase (392 aa).

N(1)-(5-phospho-beta-D-ribosyl)glycinamide is bound by residues 20–21 and Glu80; that span reads EL. Residues Arg112, Lys153, 158–163, 193–196, and Glu201 each bind ATP; these read SSGKGQ and EEFI. Positions 117–306 constitute an ATP-grasp domain; sequence RLAAEELGLP…EFELHVRAIL (190 aa). Mg(2+) contacts are provided by Glu265 and Glu277. N(1)-(5-phospho-beta-D-ribosyl)glycinamide contacts are provided by residues Asp284, Lys354, and 361-362; that span reads RR.

Belongs to the PurK/PurT family. As to quaternary structure, homodimer.

The catalysed reaction is N(1)-(5-phospho-beta-D-ribosyl)glycinamide + formate + ATP = N(2)-formyl-N(1)-(5-phospho-beta-D-ribosyl)glycinamide + ADP + phosphate + H(+). It functions in the pathway purine metabolism; IMP biosynthesis via de novo pathway; N(2)-formyl-N(1)-(5-phospho-D-ribosyl)glycinamide from N(1)-(5-phospho-D-ribosyl)glycinamide (formate route): step 1/1. Involved in the de novo purine biosynthesis. Catalyzes the transfer of formate to 5-phospho-ribosyl-glycinamide (GAR), producing 5-phospho-ribosyl-N-formylglycinamide (FGAR). Formate is provided by PurU via hydrolysis of 10-formyl-tetrahydrofolate. The protein is Formate-dependent phosphoribosylglycinamide formyltransferase of Geobacter metallireducens (strain ATCC 53774 / DSM 7210 / GS-15).